The primary structure comprises 595 residues: MSGHTVLVLYGSQTGTAQDTAERIGRQAQRRRLRVKVEALDTYNVVNLISESLVVFVCATTGQGDPPDNMKKFWRFLFRKSLPADSLSRLDCAVLGLGDSSYPKFNFVAKKLHKRLLQLGANMLLPVGLADDQHDLGPDGVIDPWLLSFWQKTLSLYPPPAGLAPLREEDKLPPRYIFHFLSEVPNKLTEHLQTVDNKSSPTPLRPFPAPLVFNQRVTHTAHFQDVRHIEFDITGSNIEFSAGDTVMMRPCNTSEDVEQLCQLLKLDPESYFTLTPTDSSTEVPARLPQPCSIRFLLEHFLDISAVPRRSFFELLATFATDELEQEKLLEFSSAAGQDTLHSYCNRPRRTALEVLTDFPHTTAELSIGRLLDLFPEIQPRSFSIASSLLEHPNRIQILLAVVKYKTMLVKPRKGLCSSWLASLDPSKGDVYVPLWVKKGSLKFPQDPESPVIMVGPGTGVAPFRSAIQERVAQGKMANVLFFGCRSESKDFYCGSEWQEKVQAGQMILVTAFSRDQEDKVYVQHRVKEQGKLLWDLIAKKNAFFYIAGNAKQMPTSVCDALKAVFQKEGGMSENQAQEMLDGMEKNGRFQSETWS.

The 145-residue stretch at 6–150 (VLVLYGSQTG…VIDPWLLSFW (145 aa)) folds into the Flavodoxin-like domain. FMN contacts are provided by residues 12 to 17 (SQTGTA), 59 to 62 (ATTG), 97 to 106 (LGDSSYPKFN), and Asp132. Residues 204–444 (LRPFPAPLVF…WVKKGSLKFP (241 aa)) enclose the FAD-binding FR-type domain. Residues Arg348, 380–383 (RSFS), and 414–417 (GLCS) contribute to the FAD site. NADP(+) is bound by residues Thr458, 513–514 (SR), and 519–523 (KVYVQ). FAD is bound at residue Trp594.

The protein belongs to the NADPH-dependent diflavin oxidoreductase NDOR1 family. In the N-terminal section; belongs to the flavodoxin family. This sequence in the C-terminal section; belongs to the flavoprotein pyridine nucleotide cytochrome reductase family. In terms of assembly, interacts with ciapin1; as part of the cytosolic iron-sulfur (Fe-S) protein assembly (CIA) machinery. Requires FAD as cofactor. It depends on FMN as a cofactor.

The protein localises to the cytoplasm. It is found in the perinuclear region. It carries out the reaction 2 oxidized [2Fe-2S]-[protein] + NADPH = 2 reduced [2Fe-2S]-[protein] + NADP(+) + H(+). NADPH-dependent reductase which is a central component of the cytosolic iron-sulfur (Fe-S) protein assembly (CIA) machinery. Transfers electrons from NADPH via its FAD and FMN prosthetic groups to the [2Fe-2S] cluster of ciapin1, another key component of the CIA machinery. In turn, this reduced cluster provides electrons for assembly of cytosolic iron-sulfur cluster proteins. It can also reduce the [2Fe-2S] cluster of cisd1 and activate this protein implicated in Fe/S cluster repair. The polypeptide is NADPH-dependent diflavin oxidoreductase 1 (Danio rerio (Zebrafish)).